The chain runs to 601 residues: Glutathione-regulated potassium-efflux system protein KefB (601 aa).

Helical transmembrane passes span 4–24, 29–49, 55–75, 87–107, 115–135, 152–172, 177–197, 207–227, 230–250, 268–288, 291–311, 324–344, and 356–376; these read SDFLLAGVLFLFAAVAAVPLA, IGAVLGYLLAGIAIGPWGLGF, EILHFSELGVVFLMFIIGLEL, IFGVGAAQVLLSSALLAGLLM, AAVVGGIGLAMSSTAMALQLM, VLLFQDLAVIPALALVPLLAG, HFDWMKIGMKVLAFVGMLIGG, FIAASGVREVFTAATLLLVLG, LFMDALGLSMALGTFIAGVLL, GLLLGLFFISVGMSLNLGVLY, LLWVVISVVVLVAVKILVLYL, MQFAGVLSQGGEFAFVLFSTA, and ALLLVTVTLSMMTTPLLMKLV. The region spanning 400–519 is the RCK N-terminal domain; sequence KPQVIVVGFG…AGVTQFSRET (120 aa).

The protein belongs to the monovalent cation:proton antiporter 2 (CPA2) transporter (TC 2.A.37) family. KefB subfamily. As to quaternary structure, interacts with the regulatory subunit KefG.

The protein resides in the cell inner membrane. Its function is as follows. Pore-forming subunit of a potassium efflux system that confers protection against electrophiles. Catalyzes K(+)/H(+) antiport. This is Glutathione-regulated potassium-efflux system protein KefB from Escherichia coli O81 (strain ED1a).